A 274-amino-acid chain; its full sequence is Lipid phosphate phosphatase 1 (274 aa).

Residues 1–15 lie on the Lumenal side of the membrane; it reads MISVMADEKHKEYFK. A helical transmembrane segment spans residues 16 to 33; sequence LYYFQYMIIGLCTILFLY. Residues 34-69 are Cytoplasmic-facing; that stretch reads SEISLVPRGQNIEFSLDDPSISKRYVPNELVGPLEC. The helical transmembrane segment at 70–87 threads the bilayer; the sequence is LILSVGLSNMVVFWTCMF. Over 88–117 the chain is Lumenal; that stretch reads DKDLLKKNRVKRLRERPDGISNDFHFMHTS. A helical transmembrane segment spans residues 118–139; sequence ILCLMLIISINAALTGALKLII. The segment at 136–144 is phosphatase sequence motif I; sequence KLIIGNLRP. Over 140 to 189 the chain is Cytoplasmic; sequence GNLRPDFVDRCIPDLQKMSDSDSLVFGLDICKQTNKWILYEGLKSTPSGH. The phosphatase sequence motif II stretch occupies residues 186–189; it reads PSGH. The chain crosses the membrane as a helical span at residues 190 to 203; it reads SSFIVSTMGFTYLW. Residues 204–214 lie on the Lumenal side of the membrane; sequence QRVFTTRNTRS. The chain crosses the membrane as a helical span at residues 215–231; that stretch reads CIWCPLLALVVMVSRVI. The phosphatase sequence motif III stretch occupies residues 228–239; it reads SRVIDHRHHWYD. The Cytoplasmic segment spans residues 232-237; that stretch reads DHRHHW. A helical transmembrane segment spans residues 238 to 255; the sequence is YDVVSGAVLAFLVIYCCW. The Lumenal portion of the chain corresponds to 256–274; sequence KWTFTNLAKRDILPSPVSV.

The protein belongs to the PA-phosphatase related phosphoesterase family.

It localises to the golgi apparatus membrane. The catalysed reaction is a 1,2-diacyl-sn-glycerol 3-diphosphate + H2O = a 1,2-diacyl-sn-glycero-3-phosphate + phosphate + H(+). It catalyses the reaction a 1,2-diacyl-sn-glycero-3-phosphate + H2O = a 1,2-diacyl-sn-glycerol + phosphate. The enzyme catalyses a 1-acyl-sn-glycero-3-phosphate + H2O = a 1-acyl-sn-glycerol + phosphate. With respect to regulation, PA phosphatase activity is magnesium ion-independent and potently inhibited by N-ethylmaleimide. Also inhibited by phenylglyoxal and propranolol. In terms of biological role, catalyzes the dephosphorylation of diacylglycerol diphosphate (DGPP) to phosphatidate (PA) and the subsequent dephosphorylation of PA to diacylglycerol (DAG). Together with DPP1, regulates intracellular DGPP and PA levels which are phospholipid molecules believed to play a signaling role in stress response. Can also use lysophosphatidic acid (LPA) as a substrate. Substrate preference is PA &gt; DGPP &gt; LPA. The protein is Lipid phosphate phosphatase 1 (LPP1) of Saccharomyces cerevisiae (strain ATCC 204508 / S288c) (Baker's yeast).